The primary structure comprises 725 residues: Glutamine-dependent NAD(+) synthetase (725 aa).

A CN hydrolase domain is found at 5 to 275 (VTVATCALNQ…VEVLTATLDL (271 aa)). Glu45 functions as the Proton acceptor; for glutaminase activity in the catalytic mechanism. Residue Lys114 is the For glutaminase activity of the active site. Cys175 serves as the catalytic Nucleophile; for glutaminase activity. The segment at 325–706 (YHRPEEEISL…KTSQTLEEQI (382 aa)) is ligase. 355–362 (PLSGGVDS) is a binding site for ATP. Ser357 is an active-site residue.

In the C-terminal section; belongs to the NAD synthetase family. In terms of assembly, homohexamer.

It catalyses the reaction deamido-NAD(+) + L-glutamine + ATP + H2O = L-glutamate + AMP + diphosphate + NAD(+) + H(+). It functions in the pathway cofactor biosynthesis; NAD(+) biosynthesis; NAD(+) from deamido-NAD(+) (L-Gln route): step 1/1. In terms of biological role, catalyzes the final step of the nicotinamide adenine dinucleotide (NAD) de novo synthesis pathway, the ATP-dependent amidation of deamido-NAD using L-glutamine as a nitrogen source. The chain is Glutamine-dependent NAD(+) synthetase (Nadsyn1) from Rattus norvegicus (Rat).